A 237-amino-acid polypeptide reads, in one-letter code: Protein GrpE (237 aa).

Disordered stretches follow at residues 1–52 (MSGD…RLQQ) and 200–237 (KVSM…QPGV). Residues 27-40 (ASINSDEGQSSAQS) are compositionally biased toward polar residues. The segment covering 204–218 (GPGPQSGASPSSAQP) has biased composition (low complexity).

The protein belongs to the GrpE family. Homodimer.

It localises to the cytoplasm. Its function is as follows. Participates actively in the response to hyperosmotic and heat shock by preventing the aggregation of stress-denatured proteins, in association with DnaK and GrpE. It is the nucleotide exchange factor for DnaK and may function as a thermosensor. Unfolded proteins bind initially to DnaJ; upon interaction with the DnaJ-bound protein, DnaK hydrolyzes its bound ATP, resulting in the formation of a stable complex. GrpE releases ADP from DnaK; ATP binding to DnaK triggers the release of the substrate protein, thus completing the reaction cycle. Several rounds of ATP-dependent interactions between DnaJ, DnaK and GrpE are required for fully efficient folding. The polypeptide is Protein GrpE (Prochlorococcus marinus (strain MIT 9313)).